Here is a 428-residue protein sequence, read N- to C-terminus: MLSRRARESNAWFLERFKRPLGRQGSKSNTNIDLATAENWLIRPEILSALKRNLQADFQSSHLSYAPGLGGTPELLSAISTFFNHFFSPTIPVAPEHIVTGAGCSSVLDTLINDICDDGDGLLVAAPYWGSFEVSSVLRNGVTLIPVQIKFHESHSAQGIVDAYRKAMENTSCKVRGLLFCNPHNPWGHILSVEVIDALLLFCEQADIHFVSDEIYALSTFGRMELPSGNLEHGEKFLSPATSFVSVLSRDLIKLGGCLITQANKELRMSQAILNNAKLCNAASAMVAPILGSTSQLSTLVNLNVQRMRKAARTAIQFAQFHGLTFCEPVAGVYIWLRLSEDCHTRDDEEEIVQRCTKHGALVGSGSDYSESQPGWFRLTFAIPDNEFLEGLNRIETAMGYKERFNGEMVQSSLGGFVSQLWKRFVLV.

Residue lysine 254 is modified to N6-(pyridoxal phosphate)lysine.

Belongs to the class-I pyridoxal-phosphate-dependent aminotransferase family. It depends on pyridoxal 5'-phosphate as a cofactor.

Its pathway is mycotoxin biosynthesis. Functionally, aminotransferase; part of the gene cluster that mediates the biosynthesis of 11'-deoxyverticillin A, one of the dimeric epipolythiodioxopiperazines (ETPs) from the verticillin family that act as mycotoxins. 11'-deoxyverticillin A is required for normal conidiation. The nonribosomal peptide synthetase verP is speculated to be responsible for condensation of amino acids to form the carbon skeleton of verticillin, whereas the cluster-specific tailoring enzymes are involved in further modifications leading to the production of 11'-deoxyverticillin A. The sequence is that of Aminotransferase verI from Clonostachys rogersoniana.